Consider the following 534-residue polypeptide: Zinc finger protein 69 homolog B (534 aa).

Residues Lys37 and Lys40 each participate in a glycyl lysine isopeptide (Lys-Gly) (interchain with G-Cter in SUMO2) cross-link. In terms of domain architecture, KRAB spans 74-145 (LTFKDVSVDF…ERDISGVPSS (72 aa)). Glycyl lysine isopeptide (Lys-Gly) (interchain with G-Cter in SUMO2) cross-links involve residues Lys178 and Lys235. 9 C2H2-type zinc fingers span residues 279-301 (FECN…MRIH), 307-329 (FRCK…QRIH), 335-357 (YECK…VRIH), 363-385 (YECR…LRTH), 391-413 (FTCK…EIIH), 419-441 (YICN…QRTH), 447-469 (YKCK…QRVH), 475-497 (YECS…QRIH), and 503-525 (YDCN…CKTH).

This sequence belongs to the krueppel C2H2-type zinc-finger protein family.

The protein localises to the nucleus. In terms of biological role, may be involved in transcriptional regulation. Essential for Golgi structural integrity. The chain is Zinc finger protein 69 homolog B (ZFP69B) from Homo sapiens (Human).